Consider the following 354-residue polypeptide: MDENKQKALAAALGQIEKQFGKGSIMRLGDNRAMDVETISTGSLSLDIALGAGGLPMGRIVEIFGPESSGKTTLTLELIAAAQREGKTCAFIDAEHALDPVYAKKLGVNIDELLVSQPDTGEQALEICDALARSGAVDVIVVDSVAALTPKAEIEGEMGDSHMGLQARMLSQAMRKLTGNLKQSNCMCIFINQIRMKIGVMFGNPETTTGGNALKFYASVRLDIRRTGAIKEGEEVVGNETRIKVVKNKIAAPFKEANTQIMYGQGFNREGELIDLGVKHKMVEKSGAWYSYNGDKIGQGKANACKYLKENPEIAKTLDKKLREMLLNPENMQLIAETSSAADDVEFGAVPEEF.

65-72 (GPESSGKT) serves as a coordination point for ATP.

It belongs to the RecA family.

The protein resides in the cytoplasm. In terms of biological role, can catalyze the hydrolysis of ATP in the presence of single-stranded DNA, the ATP-dependent uptake of single-stranded DNA by duplex DNA, and the ATP-dependent hybridization of homologous single-stranded DNAs. It interacts with LexA causing its activation and leading to its autocatalytic cleavage. This is Protein RecA from Vibrio cholerae serotype O1 (strain ATCC 39315 / El Tor Inaba N16961).